We begin with the raw amino-acid sequence, 831 residues long: Cation/H(+) symporter 13 (831 aa).

Helical transmembrane passes span 50–70, 89–109, 112–132, 147–167, 214–234, 250–270, 282–302, 303–323, 334–354, 364–384, 397–417, and 430–450; these read YALP…RLIF, VVLG…FLPA, KIII…LLGL, ILIG…TIMF, LATH…LAFN, MIIG…VWLT, VVPF…GEAM, GVHA…GPPL, FASN…TNFF, VVMI…GTAA, LCLA…TIVW, and LVII…VYLY.

The protein belongs to the monovalent cation:proton antiporter 2 (CPA2) transporter (TC 2.A.37) family. CHX (TC 2.A.37.4) subfamily. In terms of tissue distribution, preferentially expressed in pollen before and after germination. Detected in pollen grains within anthers of the flower buds or in pollen on fully open flowers and on the stigma, and in pollen tubes growing in the style. Weakly expressed in roots.

It localises to the cell membrane. In terms of biological role, high-affinity potassium transporter that plays a role in K(+) acquisition. May operate as a K(+)/H(+) symporter. The chain is Cation/H(+) symporter 13 (CHX13) from Arabidopsis thaliana (Mouse-ear cress).